Reading from the N-terminus, the 652-residue chain is Na(+)/H(+) antiporter NhaA 1 (652 aa).

Positions methionine 1 to valine 427 are na(+)/H(+) antiporter NhaA. 11 helical membrane-spanning segments follow: residues alanine 27–leucine 47, leucine 78–valine 98, threonine 114–phenylalanine 134, valine 142–leucine 162, phenylalanine 173–tyrosine 193, threonine 200–glycine 220, leucine 227–valine 247, leucine 312–alanine 332, valine 343–alanine 363, tryptophan 376–isoleucine 396, and isoleucine 411–alanine 431. The Thioredoxin domain maps to phenylalanine 428–alanine 623. Residues arginine 626–threonine 652 are disordered. The segment covering arginine 628 to glycine 642 has biased composition (basic and acidic residues).

In the N-terminal section; belongs to the NhaA Na(+)/H(+) (TC 2.A.33) antiporter family.

Its subcellular location is the cell membrane. The enzyme catalyses Na(+)(in) + 2 H(+)(out) = Na(+)(out) + 2 H(+)(in). Na(+)/H(+) antiporter that extrudes sodium in exchange for external protons. The protein is Na(+)/H(+) antiporter NhaA 1 of Salinispora arenicola (strain CNS-205).